The following is a 61-amino-acid chain: Small venom protein 1 (61 aa).

The N-terminal stretch at 1-20 (MRCVAIFLVVICAFVLQALA) is a signal peptide.

Expressed by the venom gland.

It localises to the secreted. The polypeptide is Small venom protein 1 (Pimpla hypochondriaca (Parasitoid wasp)).